Consider the following 143-residue polypeptide: Peptide methionine sulfoxide reductase B9 (143 aa).

Residues 19–140 form the MsrB domain; sequence DQDWRAILSP…NSVSLKFSEI (122 aa). Cys-58, Cys-61, Cys-104, and Cys-107 together coordinate Zn(2+). Cysteines 76 and 129 form a disulfide. Residue Cys-129 is the Nucleophile of the active site.

It belongs to the MsrB Met sulfoxide reductase family. Requires Zn(2+) as cofactor.

The protein resides in the cytoplasm. The protein localises to the cytosol. The catalysed reaction is L-methionyl-[protein] + [thioredoxin]-disulfide + H2O = L-methionyl-(R)-S-oxide-[protein] + [thioredoxin]-dithiol. Catalyzes the reduction of methionine sulfoxide (MetSO) to methionine in proteins. Plays a protective role against oxidative stress by restoring activity to proteins that have been inactivated by methionine oxidation. MSRB family specifically reduces the MetSO R-enantiomer. This chain is Peptide methionine sulfoxide reductase B9 (MSRB9), found in Arabidopsis thaliana (Mouse-ear cress).